Reading from the N-terminus, the 144-residue chain is Putative sugar phosphate isomerase RBE_0278 (144 aa).

H12 serves as a coordination point for substrate. H101 acts as the Proton donor in catalysis. R135 is a binding site for substrate.

It belongs to the LacAB/RpiB family.

This chain is Putative sugar phosphate isomerase RBE_0278, found in Rickettsia bellii (strain RML369-C).